The sequence spans 398 residues: Ubiquitin-like modifier-activating enzyme 5 (398 aa).

ATP contacts are provided by Gly-76, Asp-97, Lys-120, Asn-143, and Asn-177. Residues Cys-219 and Cys-222 each coordinate Zn(2+). The Glycyl thioester intermediate role is filled by Cys-243. Positions 296 and 301 each coordinate Zn(2+).

Belongs to the ubiquitin-activating E1 family. UBA5 subfamily.

Functionally, E1-like enzyme which activates UFM1. The sequence is that of Ubiquitin-like modifier-activating enzyme 5 from Drosophila grimshawi (Hawaiian fruit fly).